The primary structure comprises 275 residues: Dihydroxyacetone phosphatase (275 aa).

The active-site Nucleophile is the D10. Residues D10, D12, and D206 each coordinate Mg(2+). D12 acts as the Proton donor/acceptor in catalysis.

Belongs to the HAD-like hydrolase superfamily. As to quaternary structure, homohexamer. It depends on Mg(2+) as a cofactor.

The enzyme catalyses dihydroxyacetone phosphate + H2O = dihydroxyacetone + phosphate. Catalyzes dephosphorylation of dihydroxyacetone phosphate (DHAP) to produce 1,3-dihydroxyacetone (DHA). Is the main enzyme responsible for DHA production from catabolism of sugars (glucose, fructose, and sucrose) in C.glutamicum. Displays no activity toward nucleoside monophosphates (AMP, CMP, GMP, or UMP). This is Dihydroxyacetone phosphatase from Corynebacterium glutamicum (strain R).